A 154-amino-acid polypeptide reads, in one-letter code: Large ribosomal subunit protein uL30 (154 aa).

Residues 114–146 (PTLRLHPPRGGHDGVKHPVKEGGQLGKHDTEGI) are disordered. Basic and acidic residues predominate over residues 123–144 (GGHDGVKHPVKEGGQLGKHDTE).

It belongs to the universal ribosomal protein uL30 family. In terms of assembly, part of the 50S ribosomal subunit. Binds 5S rRNA.

Functionally, this is one of 5 proteins that mediate the attachment of the 5S rRNA onto the large ribosomal subunit, stabilizing the orientation of adjacent RNA domains. This Haloarcula marismortui (strain ATCC 43049 / DSM 3752 / JCM 8966 / VKM B-1809) (Halobacterium marismortui) protein is Large ribosomal subunit protein uL30.